An 80-amino-acid polypeptide reads, in one-letter code: Moroidotoxin A (80 aa).

The first 27 residues, 1-27, serve as a signal peptide directing secretion; it reads MAAVKKHLRFALVAAITIALLVAGSVA. Positions 28 to 44 are excised as a propeptide; that stretch reads DESSEDIDNIVIKTPLD. 3 disulfide bridges follow: cysteine 48–cysteine 65, cysteine 53–cysteine 67, and cysteine 61–cysteine 76.

Belongs to the gympietide family. In terms of tissue distribution, expressed in trichomes, that are stiff epidermal hairs located on the surface of petioles and leaves. Not expressed in other aerial parts.

The protein localises to the secreted. Neurotoxin certainly responsible for the defensive, persistent, and painful stings of the giant stinging tree. Inhibits inactivation of Nav1.7/SCN9A sodium channel in sensory neurons by directly interacting with TMEM233, a newly described Nav-interacting protein. Has virtually no effect on Nav1.7/SCN9A function in heterologous expression systems and in neurons that do not express TMEM233. Also weakly but significantly affects Nav1.8/SCN10A. Coexpression of TMEM233 with Nav also confers ExTxA sensitivity to Nav1.1-Nav1.6. On the Nav1.7/SCN9A channel, causes a significant hyperpolarizing shift in the voltage dependence of activation. Its effects on Nav currents are irreversible, with no apparent reduction in activity even after repeated wash steps over 30 minutes. In vivo, induces nocifensive behavior in mice (licking or biting and shaking or lifting of the affected paw) lasting for approximately 1 hour. The polypeptide is Moroidotoxin A (Dendrocnide moroides (Gympie stinging tree)).